Here is a 472-residue protein sequence, read N- to C-terminus: Radical SAM cyclopropyl synthase TigE (472 aa).

The region spanning 106-331 (GEQIKAIQLV…VIDLYEYGLD (226 aa)) is the Radical SAM core domain. Residues Cys-120, Cys-124, Cys-127, Tyr-339, Cys-360, Cys-378, Cys-414, Cys-417, Cys-423, Cys-427, and Cys-446 each contribute to the [4Fe-4S] cluster site.

The protein belongs to the radical SAM superfamily. It depends on [4Fe-4S] cluster as a cofactor.

It catalyses the reaction L-isoleucyl-[protein] + AH2 + 2 S-adenosyl-L-methionine = methylcyclopropylglycine-[protein] + 2 5'-deoxyadenosine + 2 L-methionine + A + 2 H(+). Functionally, radical S-adenosylmethionine (SAM) enzyme that catalyzes the formation of methylcyclopropylglycine (mCPG) residues from isoleucine residues residing in the repeating TIGSVS motif of the precursor peptide TigB. Is thus involved in the maturation of a ribosomally synthesized and post-translationally modified peptide (RiPP). In Paramaledivibacter caminithermalis (strain DSM 15212 / CIP 107654 / DViRD3) (Clostridium caminithermale), this protein is Radical SAM cyclopropyl synthase TigE.